Reading from the N-terminus, the 838-residue chain is P protein (838 aa).

Residues 1 to 179 (MHLEGRDGRR…KLRRCVQWLK (179 aa)) lie on the Cytoplasmic side of the membrane. Disordered regions lie at residues 38–60 (LPRG…GQSS) and 74–94 (KGRS…DSCF). Polar residues predominate over residues 78-87 (HSSLPQMSSS). A helical transmembrane segment spans residues 180–197 (VMGLFAFVVLCSILFSLY). Topologically, residues 198 to 330 (PDQGKLWQLL…QYLRGSVETQ (133 aa)) are extracellular. N-linked (GlcNAc...) asparagine glycosylation is found at N214, N218, and N273. Residues 331-347 (VTIATAILAGVYALIIF) traverse the membrane as a helical segment. At 348–353 (EIVHRT) the chain is on the cytoplasmic side. Residues 354–370 (LAAMLGSLAALAALAVI) traverse the membrane as a helical segment. Topologically, residues 371–384 (GDRPSLTHVVEWID) are extracellular. A helical membrane pass occupies residues 385–401 (FETLALLFGMMILVAIF). The Cytoplasmic portion of the chain corresponds to 402–423 (SETGFFDYCAVKAYRLSRGRVW). Residues 424-440 (AMIIMLCLIAAVLSAFL) traverse the membrane as a helical segment. The Extracellular segment spans residues 441–513 (DNVTTMLLFT…DFAGFTAHMF (73 aa)). Residue N442 is glycosylated (N-linked (GlcNAc...) asparagine). Residues 514–530 (IGICLVLLVCFPLLRLL) form a helical membrane-spanning segment. Residues 531–620 (YWNRKLYNKE…LQKKHRISDG (90 aa)) lie on the Cytoplasmic side of the membrane. The chain crosses the membrane as a helical span at residues 621–637 (ILLAKCLTVLGFVIFMF). At 638–647 (FLNSFVPGIH) the chain is on the extracellular side. Residues 648–664 (LDLGWIAILGAIWLLIL) traverse the membrane as a helical segment. The Cytoplasmic segment spans residues 665–679 (ADIHDFEIILHRVEW). Residues 680–696 (ATLLFFAALFVLMEALA) form a helical membrane-spanning segment. Over 697 to 720 (HLHLIEYVGEQTALLIKMVPEEQR) the chain is Extracellular. The helical transmembrane segment at 721–737 (LIAAIVLVVWVSALASS) threads the bilayer. The Cytoplasmic portion of the chain corresponds to 738–760 (LIDNIPFTATMIPVLLNLSHDPE). A helical transmembrane segment spans residues 761–777 (VGLPAPPLMYALAFGAC). The Extracellular segment spans residues 778–817 (LGGNGTLIGASANVVCAGIAEQHGYGFSFMEFFRLGFPMM). N781 is a glycosylation site (N-linked (GlcNAc...) asparagine). A helical membrane pass occupies residues 818–834 (VVSCTVGMCYLLVAHVV). Residues 835–838 (VGWN) are Cytoplasmic-facing.

Belongs to the CitM (TC 2.A.11) transporter family. Expressed in melanocytes and retinal pigment epithelium.

The protein resides in the melanosome membrane. The catalysed reaction is chloride(in) = chloride(out). Its function is as follows. Contributes to a melanosome-specific anion (chloride) current that modulates melanosomal pH for optimal tyrosinase activity required for melanogenesis and the melanosome maturation. One of the components of the mammalian pigmentary system. May serve as a key control point at which ethnic skin color variation is determined. Major determinant of brown and/or blue eye color. Seems to regulate the post-translational processing of tyrosinase, which catalyzes the limiting reaction in melanin synthesis. The protein is P protein of Homo sapiens (Human).